The chain runs to 517 residues: Crotonobetaine/carnitine--CoA ligase (517 aa).

Belongs to the ATP-dependent AMP-binding enzyme family.

The catalysed reaction is 4-(trimethylamino)butanoate + ATP + CoA = 4-(trimethylamino)butanoyl-CoA + AMP + diphosphate. It carries out the reaction crotonobetaine + ATP + CoA = crotonobetainyl-CoA + AMP + diphosphate. The enzyme catalyses (R)-carnitine + ATP + CoA = (R)-carnitinyl-CoA + AMP + diphosphate. It participates in amine and polyamine metabolism; carnitine metabolism. Catalyzes the transfer of CoA to carnitine, generating the initial carnitinyl-CoA needed for the CaiB reaction cycle. Also has activity toward crotonobetaine and gamma-butyrobetaine. The protein is Crotonobetaine/carnitine--CoA ligase of Escherichia coli O7:K1 (strain IAI39 / ExPEC).